A 56-amino-acid chain; its full sequence is Small ribosomal subunit protein uS14 (56 aa).

C21, C24, C39, and C42 together coordinate Zn(2+).

This sequence belongs to the universal ribosomal protein uS14 family. Zinc-binding uS14 subfamily. As to quaternary structure, part of the 30S ribosomal subunit. Zn(2+) serves as cofactor.

In terms of biological role, binds 16S rRNA, required for the assembly of 30S particles. The chain is Small ribosomal subunit protein uS14 from Pyrococcus furiosus (strain ATCC 43587 / DSM 3638 / JCM 8422 / Vc1).